We begin with the raw amino-acid sequence, 657 residues long: C4-dicarboxylate transport sensor protein DctS (657 aa).

The Cytoplasmic segment spans residues 1–26; that stretch reads MRDTTGGPAGAEVWTVPGLLGARKLD. Residues 27–51 traverse the membrane as a helical segment; the sequence is LLALIPLVAIVALMTLVGALLFAVA. At 52–252 the chain is on the periplasmic side; that stretch reads QSDANRARAK…AYDAPDAFGN (201 aa). Residues 253–273 traverse the membrane as a helical segment; it reads AALLAAIGALSVFAVLAMVVL. Residues 274–657 lie on the Cytoplasmic side of the membrane; sequence HRNALRRRMA…LPVPQEGAPA (384 aa). The PAS domain maps to 289-361; it reads AEMAFRRAME…ARQRQLIEGQ (73 aa). A PAC domain is found at 365 to 417; it reads QAFETRFRRSDGSEIEVQVFEAPLIDAGGRHRGWMGSVIDITQAKQAARLARA. An inter-domain linker region spans residues 407–422; that stretch reads QAKQAARLARAQDESL. One can recognise a Histidine kinase domain in the interval 437 to 652; it reads TLAHELNQPL…VFTVTLPVPQ (216 aa). H440 carries the phosphohistidine; by autocatalysis modification.

The protein localises to the cell inner membrane. The enzyme catalyses ATP + protein L-histidine = ADP + protein N-phospho-L-histidine.. Functionally, member of the two-component regulatory system DctS/DctR involved in the transport of C4-dicarboxylates. DctS functions as a membrane-associated protein kinase that phosphorylates DctR in response to environmental signals. The polypeptide is C4-dicarboxylate transport sensor protein DctS (dctS) (Rhodobacter capsulatus (Rhodopseudomonas capsulata)).